Reading from the N-terminus, the 610-residue chain is Glutamine--fructose-6-phosphate aminotransferase [isomerizing] (610 aa).

The active-site Nucleophile; for GATase activity is Cys-2. One can recognise a Glutamine amidotransferase type-2 domain in the interval 2–218 (CGIVGAVAQR…EGDVAEITRH (217 aa)). SIS domains lie at 286–426 (AADI…LKGR) and 459–600 (LSED…VDQP). The active-site For Fru-6P isomerization activity is Lys-605.

As to quaternary structure, homodimer.

The protein resides in the cytoplasm. It carries out the reaction D-fructose 6-phosphate + L-glutamine = D-glucosamine 6-phosphate + L-glutamate. In terms of biological role, catalyzes the first step in hexosamine metabolism, converting fructose-6P into glucosamine-6P using glutamine as a nitrogen source. The chain is Glutamine--fructose-6-phosphate aminotransferase [isomerizing] from Haemophilus ducreyi (strain 35000HP / ATCC 700724).